The following is a 97-amino-acid chain: CRISPR-associated endoribonuclease Cas2 1 (97 aa).

Residue aspartate 12 coordinates Mg(2+).

This sequence belongs to the CRISPR-associated endoribonuclease Cas2 protein family. In terms of assembly, homodimer, forms a heterotetramer with a Cas1 homodimer. The cofactor is Mg(2+).

CRISPR (clustered regularly interspaced short palindromic repeat) is an adaptive immune system that provides protection against mobile genetic elements (viruses, transposable elements and conjugative plasmids). CRISPR clusters contain sequences complementary to antecedent mobile elements and target invading nucleic acids. CRISPR clusters are transcribed and processed into CRISPR RNA (crRNA). Functions as a ssRNA-specific endoribonuclease. Involved in the integration of spacer DNA into the CRISPR cassette. The sequence is that of CRISPR-associated endoribonuclease Cas2 1 from Francisella tularensis subsp. novicida (strain U112).